The sequence spans 206 residues: Ras-related protein Rab-18 (206 aa).

Residue M1 is modified to N-acetylmethionine. Residues S17, G20, K21, S22, S23, D34, P35, T40, G66, K123, and D125 each contribute to the GTP site. Mg(2+) is bound at residue S22. Short sequence motifs (switch) lie at residues D31–F45 and D63–G80. T40 contacts Mg(2+). Phosphoserine is present on S144. GTP is bound at residue A152. The S-palmitoyl cysteine moiety is linked to residue C199. C203 carries the cysteine methyl ester modification. C203 carries S-geranylgeranyl cysteine lipidation. Residues S204–L206 constitute a propeptide, removed in mature form.

The protein belongs to the small GTPase superfamily. Rab family. In terms of assembly, interacts (in GTP-bound form) with ZFYVE1. Interacts with ZW10 and this interaction is enhanced in the presence of ZFYVE1. Interacts with BSCL2. Mg(2+) serves as cofactor. In terms of tissue distribution, expression is high in the brain, moderate in the pituitary, and low in the liver. Detected in all tissues. Highly enriched on apical endocytic structures in polarized epithelial cells of kidney proximal tubules. Detected on both the apical and basolateral domains in epithelial cells of the intestine.

Its subcellular location is the endoplasmic reticulum membrane. It is found in the golgi apparatus. It localises to the cis-Golgi network membrane. The protein localises to the lipid droplet. The protein resides in the apical cell membrane. The catalysed reaction is GTP + H2O = GDP + phosphate + H(+). Its activity is regulated as follows. Regulated by guanine nucleotide exchange factor (GEF) RAB3GAP1-RAB3GAP2 complex at the cis-Golgi membrane which promotes the exchange of bound GDP for free GTP. Regulated by GTPase activating protein (GAP) TBC1D20 at the ER membrane which increases the GTP hydrolysis activity. Inhibited by GDP dissociation inhibitors (GDIs) which prevent Rab-GDP dissociation. Functionally, the small GTPases Rab are key regulators of intracellular membrane trafficking, from the formation of transport vesicles to their fusion with membranes. Rabs cycle between an inactive GDP-bound form and an active GTP-bound form that is able to recruit to membranes different sets of downstream effectors directly responsible for vesicle formation, movement, tethering and fusion. RAB18 is required for the localization of ZFYVE1 to lipid droplets and for its function in mediating the formation of endoplasmic reticulum-lipid droplets (ER-LD) contacts. Also required for maintaining endoplasmic reticulum structure. Plays a role in apical endocytosis/recycling. Plays a key role in eye and brain development and neurodegeneration. The chain is Ras-related protein Rab-18 from Mus musculus (Mouse).